The primary structure comprises 714 residues: Fatty acid oxidation complex subunit alpha (714 aa).

Positions 1-190 are enoyl-CoA hydratase; it reads MEMASVFTLN…KLGLVDDVVP (190 aa). The 3-hydroxyacyl-CoA dehydrogenase stretch occupies residues 306-714; the sequence is APLNSVGILG…FWKTTATDLQ (409 aa).

This sequence in the N-terminal section; belongs to the enoyl-CoA hydratase/isomerase family. The protein in the central section; belongs to the 3-hydroxyacyl-CoA dehydrogenase family. In terms of assembly, heterotetramer of two alpha chains (FadJ) and two beta chains (FadI).

The protein resides in the cytoplasm. It catalyses the reaction a (3S)-3-hydroxyacyl-CoA = a (2E)-enoyl-CoA + H2O. The catalysed reaction is a 4-saturated-(3S)-3-hydroxyacyl-CoA = a (3E)-enoyl-CoA + H2O. The enzyme catalyses a (3S)-3-hydroxyacyl-CoA + NAD(+) = a 3-oxoacyl-CoA + NADH + H(+). It carries out the reaction (3S)-3-hydroxybutanoyl-CoA = (3R)-3-hydroxybutanoyl-CoA. It functions in the pathway lipid metabolism; fatty acid beta-oxidation. Its function is as follows. Catalyzes the formation of a hydroxyacyl-CoA by addition of water on enoyl-CoA. Also exhibits 3-hydroxyacyl-CoA epimerase and 3-hydroxyacyl-CoA dehydrogenase activities. The chain is Fatty acid oxidation complex subunit alpha from Escherichia coli O139:H28 (strain E24377A / ETEC).